The sequence spans 211 residues: Phosphoglycerate mutase (211 aa).

Residues 14–21 and 27–28 contribute to the substrate site; these read RHGESEWN and TG. The Tele-phosphohistidine intermediate role is filled by His-15. Phosphothreonine is present on Thr-37. Ser-62 carries the post-translational modification Phosphoserine. Substrate is bound by residues Arg-66, 93–96, Lys-104, 120–121, and 164–165; these read ERYY, RR, and GN. Catalysis depends on Glu-93, which acts as the Proton donor/acceptor. Tyr-96 is modified (phosphotyrosine). The residue at position 166 (Ser-166) is a Phosphoserine.

This sequence belongs to the phosphoglycerate mutase family. BPG-dependent PGAM subfamily. In terms of assembly, monomer. The N-terminus is blocked.

It carries out the reaction (2R)-2-phosphoglycerate = (2R)-3-phosphoglycerate. Its pathway is carbohydrate degradation; glycolysis; pyruvate from D-glyceraldehyde 3-phosphate: step 3/5. This Schizosaccharomyces pombe (strain 972 / ATCC 24843) (Fission yeast) protein is Phosphoglycerate mutase (gpm1).